Here is a 247-residue protein sequence, read N- to C-terminus: 1-(5-phosphoribosyl)-5-[(5-phosphoribosylamino)methylideneamino] imidazole-4-carboxamide isomerase (247 aa).

D8 acts as the Proton acceptor in catalysis. Catalysis depends on D129, which acts as the Proton donor.

This sequence belongs to the HisA/HisF family.

The protein resides in the cytoplasm. The enzyme catalyses 1-(5-phospho-beta-D-ribosyl)-5-[(5-phospho-beta-D-ribosylamino)methylideneamino]imidazole-4-carboxamide = 5-[(5-phospho-1-deoxy-D-ribulos-1-ylimino)methylamino]-1-(5-phospho-beta-D-ribosyl)imidazole-4-carboxamide. Its pathway is amino-acid biosynthesis; L-histidine biosynthesis; L-histidine from 5-phospho-alpha-D-ribose 1-diphosphate: step 4/9. The sequence is that of 1-(5-phosphoribosyl)-5-[(5-phosphoribosylamino)methylideneamino] imidazole-4-carboxamide isomerase from Bradyrhizobium sp. (strain BTAi1 / ATCC BAA-1182).